The sequence spans 1631 residues: Ras GTPase-activating-like protein IQGAP3 (1631 aa).

One can recognise a Calponin-homology (CH) domain in the interval 34-149 (LCRLEEAKRW…YCIHALSLFL (116 aa)). The residue at position 162 (Tyr-162) is a Phosphotyrosine. At Ser-539 the chain carries Phosphoserine. IQ domains are found at residues 730–759 (NVGFVIQLQARLRGFLVRQKFAEHSHFLRT), 760–789 (WLPAVIKIQAHWRGYRQRKIYLEWLQYFKA), 790–819 (NLDAIIKIQAWARMWAARRQYLRRLHYFQK), and 820–849 (NVNSIVKIQAFFRARKAQDDYRILVHAPHP). The 250-residue stretch at 1004 to 1253 (YLLLQLFKTA…LKFRKFIHRA (250 aa)) folds into the Ras-GAP domain. Ser-1424 carries the phosphoserine modification.

The protein is Ras GTPase-activating-like protein IQGAP3 (IQGAP3) of Homo sapiens (Human).